Consider the following 337-residue polypeptide: tRNA N6-adenosine threonylcarbamoyltransferase (337 aa).

Fe cation-binding residues include His110 and His114. Substrate-binding positions include 133-137 (MVSGG), Asp166, Gly179, Asp183, and Asn276. Residue Asp302 participates in Fe cation binding.

Belongs to the KAE1 / TsaD family. The cofactor is Fe(2+).

The protein localises to the cytoplasm. It carries out the reaction L-threonylcarbamoyladenylate + adenosine(37) in tRNA = N(6)-L-threonylcarbamoyladenosine(37) in tRNA + AMP + H(+). In terms of biological role, required for the formation of a threonylcarbamoyl group on adenosine at position 37 (t(6)A37) in tRNAs that read codons beginning with adenine. Is involved in the transfer of the threonylcarbamoyl moiety of threonylcarbamoyl-AMP (TC-AMP) to the N6 group of A37, together with TsaE and TsaB. TsaD likely plays a direct catalytic role in this reaction. This is tRNA N6-adenosine threonylcarbamoyltransferase from Fervidobacterium nodosum (strain ATCC 35602 / DSM 5306 / Rt17-B1).